We begin with the raw amino-acid sequence, 107 residues long: ATP synthase subunit c (107 aa).

Transmembrane regions (helical) follow at residues Ile4 to Gln24, Phe29 to Met49, and Met74 to Ile94.

The protein belongs to the ATPase C chain family. In terms of assembly, F-type ATPases have 2 components, F(1) - the catalytic core - and F(0) - the membrane proton channel. F(1) has five subunits: alpha(3), beta(3), gamma(1), delta(1), epsilon(1). F(0) has three main subunits: a(1), b(2) and c(10-14). The alpha and beta chains form an alternating ring which encloses part of the gamma chain. F(1) is attached to F(0) by a central stalk formed by the gamma and epsilon chains, while a peripheral stalk is formed by the delta and b chains.

The protein localises to the cell inner membrane. Its function is as follows. F(1)F(0) ATP synthase produces ATP from ADP in the presence of a proton or sodium gradient. F-type ATPases consist of two structural domains, F(1) containing the extramembraneous catalytic core and F(0) containing the membrane proton channel, linked together by a central stalk and a peripheral stalk. During catalysis, ATP synthesis in the catalytic domain of F(1) is coupled via a rotary mechanism of the central stalk subunits to proton translocation. In terms of biological role, key component of the F(0) channel; it plays a direct role in translocation across the membrane. A homomeric c-ring of between 10-14 subunits forms the central stalk rotor element with the F(1) delta and epsilon subunits. The polypeptide is ATP synthase subunit c (Campylobacter lari (strain RM2100 / D67 / ATCC BAA-1060)).